A 463-amino-acid chain; its full sequence is Argininosuccinate lyase (463 aa).

Belongs to the lyase 1 family. Argininosuccinate lyase subfamily.

It is found in the cytoplasm. It carries out the reaction 2-(N(omega)-L-arginino)succinate = fumarate + L-arginine. It participates in amino-acid biosynthesis; L-arginine biosynthesis; L-arginine from L-ornithine and carbamoyl phosphate: step 3/3. This chain is Argininosuccinate lyase, found in Thermosynechococcus vestitus (strain NIES-2133 / IAM M-273 / BP-1).